The sequence spans 486 residues: MNKPVSIGLLQQPKPFFMIFFVELWERFGYYGVQGVLTVYFVQKLGFSQEQAFITFGAFAALVFGLISIGGYVGDHLLGTKRTIVLGAIVLAIGYFMTGLSILHPNLIFYALGTIAVGNGLFKANPASLLSKCYPPKDPRLDGAFTLFYMSINLGSLFSLALAPVIAEKFSYAVTYNICGIGLIIALLVYIFCRNTVRNIGSEPDHQRINYTNLFLVVAGSVVMVYVCAWLMHNVKIANIMLITLSVIVVFIFFREALKQDKIGRNKMFVAFILMLQAIVFFILYAQMPTSLNFFAIHNVHHQLLGFNINPVSFQALNPFWIVVASPILAVLYTHWGAKGKDLTMPAKFAVGMFLCSLGFLTAAAAGLWFADEQGLTSAWFIVLVYLFQGVGELMISALGLAMIAALVPQYLMGFILGMWYLTQATSSLLGGYVAALTAAPKGITDPLQTLPVYTSVFGKIGIATFIVAIIMAATVPLLNRMMQEK.

The Cytoplasmic portion of the chain corresponds to Met1–Arg27. A helical membrane pass occupies residues Phe28–Ser48. At Gln49–Ala52 the chain is on the periplasmic side. Residues Phe53 to Val73 form a helical membrane-spanning segment. At Gly74–Arg82 the chain is on the cytoplasmic side. A helical transmembrane segment spans residues Thr83–Leu103. Over His104 to Asn106 the chain is Periplasmic. Residues Leu107 to Ala127 traverse the membrane as a helical segment. The Cytoplasmic segment spans residues Ser128 to Thr146. A helical transmembrane segment spans residues Leu147 to Ala167. The Periplasmic portion of the chain corresponds to Glu168–Tyr172. A helical membrane pass occupies residues Ala173–Cys193. Topologically, residues Arg194 to Tyr211 are cytoplasmic. The helical transmembrane segment at Thr212 to Met232 threads the bilayer. Position 233 (His233) is a topological domain, periplasmic. A helical membrane pass occupies residues Asn234–Phe254. At Arg255–Lys267 the chain is on the cytoplasmic side. A helical membrane pass occupies residues Met268–Met288. At Pro289–Pro311 the chain is on the periplasmic side. A helical membrane pass occupies residues Val312 to Leu332. Residues Tyr333–Lys348 are Cytoplasmic-facing. A helical transmembrane segment spans residues Phe349 to Trp369. Topologically, residues Phe370–Gly375 are periplasmic. Residues Leu376–Ile396 traverse the membrane as a helical segment. Residues Ser397 to Met419 are Cytoplasmic-facing. A helical membrane pass occupies residues Trp420–Ala440. Topologically, residues Pro441–Ser456 are periplasmic. A helical membrane pass occupies residues Val457–Pro477. At Leu478–Lys486 the chain is on the cytoplasmic side.

The protein belongs to the major facilitator superfamily. Proton-dependent oligopeptide transporter (POT/PTR) (TC 2.A.17) family. DtpB subfamily.

It localises to the cell inner membrane. Functionally, proton-dependent permease that transports di- and tripeptides. This Photorhabdus luminescens (Xenorhabdus luminescens) protein is Dipeptide and tripeptide permease B.